The chain runs to 66 residues: Large ribosomal subunit protein bL33c (66 aa).

It belongs to the bacterial ribosomal protein bL33 family.

Its subcellular location is the plastid. It localises to the chloroplast. This Lobularia maritima (Sweet alyssum) protein is Large ribosomal subunit protein bL33c.